The following is a 421-amino-acid chain: Gamma-glutamyl phosphate reductase (421 aa).

The protein belongs to the gamma-glutamyl phosphate reductase family.

The protein resides in the cytoplasm. It catalyses the reaction L-glutamate 5-semialdehyde + phosphate + NADP(+) = L-glutamyl 5-phosphate + NADPH + H(+). It functions in the pathway amino-acid biosynthesis; L-proline biosynthesis; L-glutamate 5-semialdehyde from L-glutamate: step 2/2. Catalyzes the NADPH-dependent reduction of L-glutamate 5-phosphate into L-glutamate 5-semialdehyde and phosphate. The product spontaneously undergoes cyclization to form 1-pyrroline-5-carboxylate. This Dinoroseobacter shibae (strain DSM 16493 / NCIMB 14021 / DFL 12) protein is Gamma-glutamyl phosphate reductase.